The chain runs to 360 residues: Phosphoserine aminotransferase (360 aa).

R41 serves as a coordination point for L-glutamate. Residues W101, T152, D172, and Q195 each contribute to the pyridoxal 5'-phosphate site. Position 196 is an N6-(pyridoxal phosphate)lysine (K196). 237–238 (NT) is a pyridoxal 5'-phosphate binding site.

This sequence belongs to the class-V pyridoxal-phosphate-dependent aminotransferase family. SerC subfamily. As to quaternary structure, homodimer. Pyridoxal 5'-phosphate serves as cofactor.

The protein resides in the cytoplasm. It carries out the reaction O-phospho-L-serine + 2-oxoglutarate = 3-phosphooxypyruvate + L-glutamate. The catalysed reaction is 4-(phosphooxy)-L-threonine + 2-oxoglutarate = (R)-3-hydroxy-2-oxo-4-phosphooxybutanoate + L-glutamate. Its pathway is amino-acid biosynthesis; L-serine biosynthesis; L-serine from 3-phospho-D-glycerate: step 2/3. It participates in cofactor biosynthesis; pyridoxine 5'-phosphate biosynthesis; pyridoxine 5'-phosphate from D-erythrose 4-phosphate: step 3/5. Its function is as follows. Catalyzes the reversible conversion of 3-phosphohydroxypyruvate to phosphoserine and of 3-hydroxy-2-oxo-4-phosphonooxybutanoate to phosphohydroxythreonine. The polypeptide is Phosphoserine aminotransferase (Burkholderia lata (strain ATCC 17760 / DSM 23089 / LMG 22485 / NCIMB 9086 / R18194 / 383)).